The sequence spans 139 residues: MPNFSGNWKIIRSENFEEMLKALGVNMMMRKIAVAAASKPAVEIKQENDDTFYIKTSTTVRTTEINFKIGEEFEEQTVDGRPCKSLVKWESENKMVCEQRLLKGEGPKTSWSRELTNDGELILTMTADDVVCTRVYVRE.

The Nuclear localization signal signature appears at 21–31 (KALGVNMMMRK). Lys-103 participates in a covalent cross-link: Glycyl lysine isopeptide (Lys-Gly) (interchain with G-Cter in SUMO). 134 to 136 (RVY) lines the all-trans-retinoate pocket.

It belongs to the calycin superfamily. Fatty-acid binding protein (FABP) family. In terms of assembly, interacts with importin alpha, RXR and RARA. Post-translationally, sumoylated in response to retinoic acid binding, sumoylation is critical for dissociation from ER and subsequent nuclear translocation.

Its subcellular location is the cytoplasm. It is found in the endoplasmic reticulum. It localises to the nucleus. Functionally, transports retinoic acid to the nucleus. Regulates the access of retinoic acid to the nuclear retinoic acid receptors. This Rattus norvegicus (Rat) protein is Cellular retinoic acid-binding protein 2 (Crabp2).